Here is a 204-residue protein sequence, read N- to C-terminus: Imidazoleglycerol-phosphate dehydratase (204 aa).

This sequence belongs to the imidazoleglycerol-phosphate dehydratase family.

The protein resides in the cytoplasm. The catalysed reaction is D-erythro-1-(imidazol-4-yl)glycerol 3-phosphate = 3-(imidazol-4-yl)-2-oxopropyl phosphate + H2O. It participates in amino-acid biosynthesis; L-histidine biosynthesis; L-histidine from 5-phospho-alpha-D-ribose 1-diphosphate: step 6/9. The protein is Imidazoleglycerol-phosphate dehydratase of Rhodococcus opacus (strain B4).